The sequence spans 735 residues: Polyribonucleotide nucleotidyltransferase (735 aa).

The Mg(2+) site is built by aspartate 515 and aspartate 521. A KH domain is found at 581–641; sequence PKLELFSVDP…KNVDAAKDYI (61 aa). The disordered stretch occupies residues 649–671; that stretch reads NSRGFGKKPHGHDRRDKDRQKPT. The 60-residue stretch at 675 to 734 folds into the S1 motif domain; that stretch reads GDEFDGVVKSVVDFGAFIELKDGVDGLLHISKIKTPLNVGDRLKVCVSEQKGNKISLSLV.

The protein belongs to the polyribonucleotide nucleotidyltransferase family. Mg(2+) is required as a cofactor.

Its subcellular location is the cytoplasm. The enzyme catalyses RNA(n+1) + phosphate = RNA(n) + a ribonucleoside 5'-diphosphate. Functionally, involved in mRNA degradation. Catalyzes the phosphorolysis of single-stranded polyribonucleotides processively in the 3'- to 5'-direction. The sequence is that of Polyribonucleotide nucleotidyltransferase from Campylobacter curvus (strain 525.92).